We begin with the raw amino-acid sequence, 208 residues long: Large ribosomal subunit protein uL4 (208 aa).

Positions 49-78 are disordered; sequence KAKGISDISGTTAKPYRQKHTGRARQGSLR.

This sequence belongs to the universal ribosomal protein uL4 family. Part of the 50S ribosomal subunit.

In terms of biological role, one of the primary rRNA binding proteins, this protein initially binds near the 5'-end of the 23S rRNA. It is important during the early stages of 50S assembly. It makes multiple contacts with different domains of the 23S rRNA in the assembled 50S subunit and ribosome. Forms part of the polypeptide exit tunnel. This Anaplasma phagocytophilum (strain HZ) protein is Large ribosomal subunit protein uL4.